The chain runs to 295 residues: MAPTQIFVSPEFYGVYILQSEPSPRSFYIGSTPDPIRRLRQHNGDLKQGAFRTRRTSRRPWKMIAITHNFPSRVAALQFEHALQHPKTSRHMAGGGGSVTATAETAKSAPVAGKSDATSPAKNRRNAAPVARSGRTHLRNVARLLESPYFSRMGLKVTIFDPSLFDMDLLPAQLQSFAAFSGARTAACSDYFSVAKKAALTTAHCCLCSDAIDYVPEMLPESIKDVLLVLPLIAVCPSCAVICHLRCLAASWYQSSEINAALIPSDVSCSQCGAQTSWRLVADMATKLRQYALSS.

One can recognise a GIY-YIG domain in the interval 11-93; the sequence is EFYGVYILQS…QHPKTSRHMA (83 aa). Residues 85–133 are disordered; sequence HPKTSRHMAGGGGSVTATAETAKSAPVAGKSDATSPAKNRRNAAPVARS. The SLX1-type zinc-finger motif lies at 205 to 272; that stretch reads CCLCSDAIDY…IPSDVSCSQC (68 aa).

The protein belongs to the SLX1 family. Forms a heterodimer with SLX4. A divalent metal cation serves as cofactor.

Its subcellular location is the nucleus. Functionally, catalytic subunit of the SLX1-SLX4 structure-specific endonuclease that resolves DNA secondary structures generated during DNA repair and recombination. Has endonuclease activity towards branched DNA substrates, introducing single-strand cuts in duplex DNA close to junctions with ss-DNA. In Meyerozyma guilliermondii (strain ATCC 6260 / CBS 566 / DSM 6381 / JCM 1539 / NBRC 10279 / NRRL Y-324) (Yeast), this protein is Structure-specific endonuclease subunit SLX1.